The primary structure comprises 457 residues: Chromosomal replication initiator protein DnaA (457 aa).

The domain I, interacts with DnaA modulators stretch occupies residues 1–73 (MANNYQTLYD…SKYLSEEFKK (73 aa)). The domain II stretch occupies residues 73 to 108 (KENIVNFEFIIDNEKLLINSNFLIKETNIKNRFNFS). The segment at 109–331 (DELLRYNFNN…GNLKQICFWA (223 aa)) is domain III, AAA+ region. ATP-binding residues include G156, G158, K159, and T160. Residues 332 to 457 (DNDTNKDLII…LQINLIINKF (126 aa)) are domain IV, binds dsDNA.

Belongs to the DnaA family. Oligomerizes as a right-handed, spiral filament on DNA at oriC.

Its subcellular location is the cytoplasm. Plays an essential role in the initiation and regulation of chromosomal replication. ATP-DnaA binds to the origin of replication (oriC) to initiate formation of the DNA replication initiation complex once per cell cycle. Binds the DnaA box (a 9 base pair repeat at the origin) and separates the double-stranded (ds)DNA. Forms a right-handed helical filament on oriC DNA; dsDNA binds to the exterior of the filament while single-stranded (ss)DNA is stabiized in the filament's interior. The ATP-DnaA-oriC complex binds and stabilizes one strand of the AT-rich DNA unwinding element (DUE), permitting loading of DNA polymerase. After initiation quickly degrades to an ADP-DnaA complex that is not apt for DNA replication. Binds acidic phospholipids. This is Chromosomal replication initiator protein DnaA from Ureaplasma parvum serovar 3 (strain ATCC 700970).